The following is a 333-amino-acid chain: Fructose-1,6-bisphosphatase class 1 1 (333 aa).

Mg(2+) contacts are provided by Glu81, Asp100, Leu102, and Asp103. Residues 103–106 (DGSS) and Asn191 each bind substrate. Position 263 (Glu263) interacts with Mg(2+).

It belongs to the FBPase class 1 family. In terms of assembly, homotetramer. Requires Mg(2+) as cofactor.

It localises to the cytoplasm. It carries out the reaction beta-D-fructose 1,6-bisphosphate + H2O = beta-D-fructose 6-phosphate + phosphate. It participates in carbohydrate biosynthesis; gluconeogenesis. Its activity is regulated as follows. Fructose-1,6-bisphosphatase II is not light-activated. This is Fructose-1,6-bisphosphatase class 1 1 from Cereibacter sphaeroides (Rhodobacter sphaeroides).